A 308-amino-acid chain; its full sequence is MVTTLDNALLNDILQQVRPLIGQGKVADYIPALAEVPANKLGIAVCTLDGQIFQAGDADERFSIQSISKVLSLTLALSRYSEQDIWQRVGKEPSGQPFNSLVQLELEKGKPRNPFINLGALVVCDMLQSRLSAPKQRLLEVVRQLVKDDSISYDPRVARSEFEHSDRNAAIAYLMKSFGNFDNDVLTVLQTYFHYCAMRMSCVELARCFVYLANQGRSISGSESLITPMQARQINALMITSGMYDGAGEFAFRVGMPGKSGVGGGIIAIVPDEFCIAVWSPELDHAGNSLAGTAALERLAQQMGRSIF.

Residues S66, N117, E161, N168, Y192, Y244, and V262 each coordinate substrate.

This sequence belongs to the glutaminase family. In terms of assembly, homotetramer.

The enzyme catalyses L-glutamine + H2O = L-glutamate + NH4(+). The sequence is that of Glutaminase from Yersinia pestis bv. Antiqua (strain Nepal516).